We begin with the raw amino-acid sequence, 223 residues long: uncharacterized protein (223 aa).

The disordered stretch occupies residues 1 to 30 (MASATVRNVPLLDDDTIPFGEEDEMRDPSR). The span at 12–25 (LDDDTIPFGEEDEM) shows a compositional bias: acidic residues. 4 consecutive transmembrane segments (helical) span residues 35–55 (YTHP…ILIY), 56–76 (MFCG…VLFL), 129–149 (IFWL…LFAL), and 154–174 (FKWL…LYGY).

Belongs to the TVP23 family.

Its subcellular location is the membrane. This is an uncharacterized protein from Drosophila melanogaster (Fruit fly).